Reading from the N-terminus, the 338-residue chain is D-erythrose-4-phosphate dehydrogenase (338 aa).

11-12 is a binding site for NAD(+); sequence RI. Residues 153–155, Arg199, 212–213, and Arg235 each bind substrate; these read SCT and TK. Catalysis depends on Cys154, which acts as the Nucleophile. An NAD(+)-binding site is contributed by Asn317.

This sequence belongs to the glyceraldehyde-3-phosphate dehydrogenase family. Epd subfamily. As to quaternary structure, homotetramer.

It is found in the cytoplasm. The catalysed reaction is D-erythrose 4-phosphate + NAD(+) + H2O = 4-phospho-D-erythronate + NADH + 2 H(+). It functions in the pathway cofactor biosynthesis; pyridoxine 5'-phosphate biosynthesis; pyridoxine 5'-phosphate from D-erythrose 4-phosphate: step 1/5. Functionally, catalyzes the NAD-dependent conversion of D-erythrose 4-phosphate to 4-phosphoerythronate. This Shewanella baltica (strain OS223) protein is D-erythrose-4-phosphate dehydrogenase.